The following is a 142-amino-acid chain: Large ribosomal subunit protein uL11 (142 aa).

Belongs to the universal ribosomal protein uL11 family. In terms of assembly, part of the ribosomal stalk of the 50S ribosomal subunit. Interacts with L10 and the large rRNA to form the base of the stalk. L10 forms an elongated spine to which L12 dimers bind in a sequential fashion forming a multimeric L10(L12)X complex. Post-translationally, one or more lysine residues are methylated.

Functionally, forms part of the ribosomal stalk which helps the ribosome interact with GTP-bound translation factors. In Mycobacterium tuberculosis (strain ATCC 25177 / H37Ra), this protein is Large ribosomal subunit protein uL11.